A 189-amino-acid polypeptide reads, in one-letter code: SAGA-associated factor 11 homolog (189 aa).

The SGF11-type zinc-finger motif lies at 94–115 (CTCPNCDRLVAATRFAPHLEKC). A disordered region spans residues 128–189 (RRLATKEGSS…GSKKNNGKTF (62 aa)). Over residues 136 to 145 (SSASSTSTST) the composition is skewed to low complexity. Ser165 bears the Phosphoserine mark. Low complexity predominate over residues 175-189 (NSRNNGSKKNNGKTF).

It belongs to the SGF11 family. Component of some SAGA transcription coactivator-HAT complexes, at least composed of Ada2b, not/nonstop, Pcaf/Gcn5, Sgf11 and Spt3. Within the SAGA complex, Sgf11, e(y)2, and not/nonstop form an additional subcomplex of SAGA called the DUB module (deubiquitination module). Interacts directly with not/nonstop. Interacts with the AMEX complex component xmas-2. Interacts with Cbp80; important for promoter recruitment of Sgf11 that is not associated with the DUB module.

The protein resides in the nucleus. The protein localises to the nucleoplasm. It localises to the cytoplasm. Its function is as follows. Component of the transcription regulatory histone acetylation (HAT) complex SAGA, a multiprotein complex that activates transcription by remodeling chromatin and mediating histone acetylation and deubiquitination. Within the SAGA complex, participates in a subcomplex that specifically deubiquitinates histone H2B. The SAGA complex is recruited to specific gene promoters by activators, where it is required for transcription. Required for nuclear receptor-mediated transactivation. Binds independently on SAGA to promoters in an RNA-dependent manner. Binds to mRNA and is essential for total mRNA export from the nucleus. Required to counteract heterochromatin silencing. Controls the development of neuronal connectivity in visual system by being required for accurate axon targeting in the optic lobe. Required for expression of ecdysone-induced genes such as br/broad. The polypeptide is SAGA-associated factor 11 homolog (Drosophila virilis (Fruit fly)).